A 422-amino-acid chain; its full sequence is MTEISSMVITHAKATVEEMEDSWHGDIDLVLSQLYSNELVYECAVLKTCNRVEIYVVSSKGSSVLFHYAKEMGVSAKIVEFYDHDESLRHLLRLACGLESMIIGEDQILGQIKDFFLMAKGAGTVGKVLSTAFSKAIQVGKRVRTETFINRGAVSIASAAVDLAEDILDGLNDKHILVIGTGEMGTLVTRALSHRDMHVIYLANRTYEKARDLAEELGGEAVMFDQLEKYVRAADVVISATSAPHYVLKGDLVAKVMEGRENELLLIDIASPRDIDPAVEEIPHVILRNIDGLRVINEKNLQMRMVEAKKAEIIIDDELDMVKAQYKRQKADAIISNLYSQSHGLRHNEMEHAINKLSAYHTIGEIERKVLEDLTHAITNKILAEPTKKLRNAAEYDDDKFLDSVSRLFDIRPIKKNDGITK.

Substrate is bound by residues 48-51 (TCNR), Ser-100, 105-107 (EDQ), and Gln-111. The active-site Nucleophile is the Cys-49. 180-185 (GTGEMG) is an NADP(+) binding site.

Belongs to the glutamyl-tRNA reductase family. In terms of assembly, homodimer.

The enzyme catalyses (S)-4-amino-5-oxopentanoate + tRNA(Glu) + NADP(+) = L-glutamyl-tRNA(Glu) + NADPH + H(+). It functions in the pathway porphyrin-containing compound metabolism; protoporphyrin-IX biosynthesis; 5-aminolevulinate from L-glutamyl-tRNA(Glu): step 1/2. Functionally, catalyzes the NADPH-dependent reduction of glutamyl-tRNA(Glu) to glutamate 1-semialdehyde (GSA). The protein is Glutamyl-tRNA reductase of Methanococcoides burtonii (strain DSM 6242 / NBRC 107633 / OCM 468 / ACE-M).